We begin with the raw amino-acid sequence, 518 residues long: 4-trimethylaminobutyraldehyde dehydrogenase B (518 aa).

Residues K204 and 256–260 (GSVPT) contribute to the NAD(+) site. Residue E278 is the Proton acceptor of the active site. Catalysis depends on C312, which acts as the Nucleophile. E415 is a binding site for NAD(+).

This sequence belongs to the aldehyde dehydrogenase family. Homotetramer.

The protein resides in the cytoplasm. It is found in the cytosol. The enzyme catalyses 4-(trimethylamino)butanal + NAD(+) + H2O = 4-(trimethylamino)butanoate + NADH + 2 H(+). It carries out the reaction an aldehyde + NAD(+) + H2O = a carboxylate + NADH + 2 H(+). It functions in the pathway amine and polyamine biosynthesis; carnitine biosynthesis. In terms of biological role, converts gamma-trimethylaminobutyraldehyde into gamma-butyrobetaine with high efficiency (in vitro). Can catalyze the irreversible oxidation of a broad range of aldehydes to the corresponding acids in an NAD-dependent reaction, but with low efficiency. The protein is 4-trimethylaminobutyraldehyde dehydrogenase B (aldh9a1b) of Danio rerio (Zebrafish).